The primary structure comprises 119 residues: Large ribosomal subunit protein bL20c (119 aa).

It belongs to the bacterial ribosomal protein bL20 family.

It is found in the plastid. Its subcellular location is the chloroplast. Its function is as follows. Binds directly to 23S ribosomal RNA and is necessary for the in vitro assembly process of the 50S ribosomal subunit. It is not involved in the protein synthesizing functions of that subunit. The chain is Large ribosomal subunit protein bL20c from Amborella trichopoda.